We begin with the raw amino-acid sequence, 165 residues long: UPF0303 protein Bcep1808_1522 (165 aa).

Belongs to the UPF0303 family.

This Burkholderia vietnamiensis (strain G4 / LMG 22486) (Burkholderia cepacia (strain R1808)) protein is UPF0303 protein Bcep1808_1522.